The sequence spans 729 residues: Subtilisin-like protease SBT4.3 (729 aa).

Residues 1–23 form the signal peptide; sequence MAKLSTPLYLICLAFIFTRDVSA. The propeptide at 24–109 is activation peptide; the sequence is NDYRQASSVY…VFPSKSHELT (86 aa). The Inhibitor I9 domain occupies 32-108; sequence VYIVYMGTLP…SVFPSKSHEL (77 aa). Asn-82 carries N-linked (GlcNAc...) asparagine glycosylation. The region spanning 113 to 580 is the Peptidase S8 domain; that stretch reads SWDFVGFGEK…SGQINPTKAS (468 aa). Catalysis depends on charge relay system residues Asp-139 and His-196. Asn-275, Asn-348, Asn-359, and Asn-363 each carry an N-linked (GlcNAc...) asparagine glycan. One can recognise a PA domain in the interval 350 to 436; sequence TKFPIVYGQN…LGFEDYKSIK (87 aa). Residue Ser-521 is the Charge relay system of the active site. N-linked (GlcNAc...) asparagine glycans are attached at residues Asn-614, Asn-642, and Asn-656.

Belongs to the peptidase S8 family. In terms of processing, the C-terminal propeptide is autocleaved.

It is found in the secreted. The sequence is that of Subtilisin-like protease SBT4.3 from Arabidopsis thaliana (Mouse-ear cress).